The chain runs to 769 residues: Cap-specific mRNA (nucleoside-2'-O-)-methyltransferase 2 (769 aa).

Positions 109 to 322 (ELCTQAWCKF…VYVVCLYYKG (214 aa)) constitute an Adrift-type SAM-dependent 2'-O-MTase domain. Residue Lys-117 is part of the active site. S-adenosyl-L-methionine contacts are provided by Gly-148, Trp-167, and Asp-235. The active site involves Asp-235. The active-site Proton acceptor is Lys-275.

It is found in the nucleus. It localises to the cytoplasm. It carries out the reaction a 5'-end (N(7)-methyl 5'-triphosphoguanosine)-(2'-O-methyl-ribonucleoside)-(ribonucleotide) in mRNA + S-adenosyl-L-methionine = a 5'-end (N(7)-methyl 5'-triphosphoguanosine)-(2'-O-methyl-ribonucleoside)-(2'-O-methyl-ribonucleotide) in mRNA + S-adenosyl-L-homocysteine + H(+). S-adenosyl-L-methionine-dependent methyltransferase that mediates mRNA cap2 2'-O-ribose methylation to the 5'-cap structure of mRNAs. Methylates the ribose of the second nucleotide of a m(7)GpppG-capped mRNA and small nuclear RNA (snRNA) (cap0) to produce m(7)GpppRmpNm (cap2). Recognizes a guanosine cap on RNA independently of its N(7) methylation status. Display cap2 methylation on both cap0 and cap1. Displays a preference for cap1 RNAs. This Pongo abelii (Sumatran orangutan) protein is Cap-specific mRNA (nucleoside-2'-O-)-methyltransferase 2 (CMTR2).